Consider the following 141-residue polypeptide: Lutropin subunit beta (141 aa).

The first 20 residues, 1–20, serve as a signal peptide directing secretion; the sequence is MEMLQGLLLWLLLSMGGARA. 6 cysteine pairs are disulfide-bonded: C29–C77, C43–C92, C46–C130, C54–C108, C58–C110, and C113–C120. N-linked (GlcNAc...) asparagine glycans are attached at residues N33 and N50.

It belongs to the glycoprotein hormones subunit beta family. Heterodimer of a common alpha chain and a unique beta chain which confers biological specificity to thyrotropin, lutropin, follitropin and gonadotropin.

The protein resides in the secreted. In terms of biological role, promotes spermatogenesis and ovulation by stimulating the testes and ovaries to synthesize steroids. In Macaca fascicularis (Crab-eating macaque), this protein is Lutropin subunit beta (LHB).